We begin with the raw amino-acid sequence, 488 residues long: 3-octaprenyl-4-hydroxybenzoate carboxy-lyase (488 aa).

Asn172 is a binding site for Mn(2+). Residues 175-177, 189-191, and 194-195 each bind prenylated FMN; these read IYR, RWL, and RG. Glu238 is a binding site for Mn(2+). Residue Asp287 is the Proton donor of the active site.

Belongs to the UbiD family. As to quaternary structure, homohexamer. It depends on prenylated FMN as a cofactor. The cofactor is Mn(2+).

It localises to the cell membrane. It catalyses the reaction a 4-hydroxy-3-(all-trans-polyprenyl)benzoate + H(+) = a 2-(all-trans-polyprenyl)phenol + CO2. The protein operates within cofactor biosynthesis; ubiquinone biosynthesis. Its function is as follows. Catalyzes the decarboxylation of 3-octaprenyl-4-hydroxy benzoate to 2-octaprenylphenol, an intermediate step in ubiquinone biosynthesis. The chain is 3-octaprenyl-4-hydroxybenzoate carboxy-lyase from Legionella pneumophila subsp. pneumophila (strain Philadelphia 1 / ATCC 33152 / DSM 7513).